Consider the following 221-residue polypeptide: Large ribosomal subunit protein uL16A (221 aa).

This sequence belongs to the universal ribosomal protein uL16 family. In terms of assembly, component of the large ribosomal subunit (LSU). Mature yeast ribosomes consist of a small (40S) and a large (60S) subunit. The 40S small subunit contains 1 molecule of ribosomal RNA (18S rRNA) and at least 33 different proteins. The large 60S subunit contains 3 rRNA molecules (25S, 5.8S and 5S rRNA) and at least 46 different proteins.

It localises to the cytoplasm. Component of the ribosome, a large ribonucleoprotein complex responsible for the synthesis of proteins in the cell. The small ribosomal subunit (SSU) binds messenger RNAs (mRNAs) and translates the encoded message by selecting cognate aminoacyl-transfer RNA (tRNA) molecules. The large subunit (LSU) contains the ribosomal catalytic site termed the peptidyl transferase center (PTC), which catalyzes the formation of peptide bonds, thereby polymerizing the amino acids delivered by tRNAs into a polypeptide chain. The nascent polypeptides leave the ribosome through a tunnel in the LSU and interact with protein factors that function in enzymatic processing, targeting, and the membrane insertion of nascent chains at the exit of the ribosomal tunnel. This Schizosaccharomyces pombe (strain 972 / ATCC 24843) (Fission yeast) protein is Large ribosomal subunit protein uL16A (rpl1001).